The chain runs to 229 residues: Aldehyde oxidoreductase iron-sulfur-binding subunit PaoA (229 aa).

The disordered stretch occupies residues 1–21 (MSNQGEYPEDNRVGKHEPHDL). The segment at residues 1–53 (MSNQGEYPEDNRVGKHEPHDLSLTRRDLIKVSAATAAAAVVYPHSTLAASVPA) is a signal peptide (tat-type signal). The segment covering 9 to 21 (EDNRVGKHEPHDL) has biased composition (basic and acidic residues). One can recognise a 2Fe-2S ferredoxin-type domain in the interval 61–137 (MPLTLKVNGK…GAEITTIEGL (77 aa)). [2Fe-2S] cluster-binding residues include Cys-99, Cys-104, Gly-105, Cys-107, Cys-119, Cys-158, Cys-161, Cys-208, and Cys-210.

In terms of assembly, heterotrimer composed of PaoA, PaoB and PaoC. [2Fe-2S] cluster serves as cofactor. Post-translationally, exported by the Tat system. The position of the signal peptide cleavage has not been experimentally proven.

The protein resides in the periplasm. The enzyme catalyses an aldehyde + A + H2O = a carboxylate + AH2 + H(+). In terms of biological role, oxidizes aldehydes to the corresponding carboxylic acids with a preference for aromatic aldehydes. It might play a role in the detoxification of aldehydes to avoid cell damage. The sequence is that of Aldehyde oxidoreductase iron-sulfur-binding subunit PaoA from Escherichia coli O157:H7.